The sequence spans 231 residues: Modulator of macroautophagy TMEM150B-B (231 aa).

A topological domain (cytoplasmic) is located at residue M1. The chain crosses the membrane as a helical span at residues 2-22 (WAWALLPICLTVWATGGIWIV). At 23-50 (YAMSVSNGSVNLSDGFPYISVSGTYPPQ) the chain is on the extracellular side. N29 and N33 each carry an N-linked (GlcNAc...) asparagine glycan. The helical transmembrane segment at 51 to 71 (SCVFGQVLNVGAMLAVWISVI) threads the bilayer. Residues 72-83 (RFQQIRDYNCHS) are Cytoplasmic-facing. A helical membrane pass occupies residues 84–104 (VLNSVSLATGILCALGTSIVG). Topologically, residues 105–115 (NFQQSNQLQTH) are extracellular. The chain crosses the membrane as a helical span at residues 116-136 (LAGAFLAFIIGNVYFWMQTAL). Over 137 to 150 (TYMVKPKHGGCYIG) the chain is Cytoplasmic. Residues 151–171 (PIRFCLSIACTALIVAMAVFL) traverse the membrane as a helical segment. Topologically, residues 172–183 (KMNMKSVSAICE) are extracellular. The chain crosses the membrane as a helical span at residues 184–204 (WIVAMILFLLYGLFAVDFWHL). Over 205–231 (DGHFFHVKKRRTVIPNEMEVSTVTLSI) the chain is Cytoplasmic.

The protein belongs to the DRAM/TMEM150 family.

Its subcellular location is the cell membrane. The protein localises to the endosome membrane. It localises to the cytoplasmic vesicle. It is found in the autophagosome membrane. Its function is as follows. Modulator of macroautophagy that causes accumulation of autophagosomes under basal conditions and enhances autophagic flux. Represses cell death and promotes long-term clonogenic survival of cells grown in the absence of glucose in a macroautophagy-independent manner. May have some role in extracellular matrix engulfment or growth factor receptor recycling, both of which can modulate cell survival. In Xenopus laevis (African clawed frog), this protein is Modulator of macroautophagy TMEM150B-B.